A 250-amino-acid polypeptide reads, in one-letter code: 3-deoxy-manno-octulosonate cytidylyltransferase (250 aa).

It belongs to the KdsB family.

The protein localises to the cytoplasm. It catalyses the reaction 3-deoxy-alpha-D-manno-oct-2-ulosonate + CTP = CMP-3-deoxy-beta-D-manno-octulosonate + diphosphate. It participates in nucleotide-sugar biosynthesis; CMP-3-deoxy-D-manno-octulosonate biosynthesis; CMP-3-deoxy-D-manno-octulosonate from 3-deoxy-D-manno-octulosonate and CTP: step 1/1. It functions in the pathway bacterial outer membrane biogenesis; lipopolysaccharide biosynthesis. Activates KDO (a required 8-carbon sugar) for incorporation into bacterial lipopolysaccharide in Gram-negative bacteria. The sequence is that of 3-deoxy-manno-octulosonate cytidylyltransferase from Rhizobium meliloti (strain 1021) (Ensifer meliloti).